We begin with the raw amino-acid sequence, 247 residues long: Chaperone protein NfaE (247 aa).

Residues 1–29 (MKMRAVAVFTGMLTGVLSVTGLLSAGAYA) form the signal peptide. A disordered region spans residues 106-125 (GQQSSRRRSVSTGGEFPSDR).

It belongs to the periplasmic pilus chaperone family.

The protein resides in the periplasm. In terms of biological role, involved in the biogenesis of the NFA-I adhesin. This chain is Chaperone protein NfaE (nfaE), found in Escherichia coli.